We begin with the raw amino-acid sequence, 942 residues long: Chitin synthase 4 (942 aa).

The disordered stretch occupies residues 1–124 (MPPRYPFGGG…FDEHDGDVPL (124 aa)). Residues 14–26 (DEAHHQPLERRTT) show a composition bias toward basic and acidic residues. The span at 27-36 (AEAQGNSFTH) shows a compositional bias: polar residues. N604 is a glycosylation site (N-linked (GlcNAc...) asparagine). The next 7 membrane-spanning stretches (helical) occupy residues 641–661 (TIQLIFSWFGMANFFIAFFIL), 674–694 (VPNLVLSYIYVAFIIFCFLLS), 709–729 (AMVVFALLTVYMTGAAIYLAV), 755–775 (IVISLAATFGIWLIASIMFLE), 783–803 (IVQYLLMAPTFVNVISIYAFA), 885–905 (VLCWSLSNAALVVGILNISSI), and 909–929 (TIYMGFLLYSVAGLALFRMMG).

Belongs to the chitin synthase family. Class I subfamily.

Its subcellular location is the cell membrane. It localises to the cytoplasmic vesicle membrane. The catalysed reaction is [(1-&gt;4)-N-acetyl-beta-D-glucosaminyl](n) + UDP-N-acetyl-alpha-D-glucosamine = [(1-&gt;4)-N-acetyl-beta-D-glucosaminyl](n+1) + UDP + H(+). Polymerizes chitin, a structural polymer of the cell wall and septum, by transferring the sugar moiety of UDP-GlcNAc to the non-reducing end of the growing chitin polymer. This chain is Chitin synthase 4, found in Mycosarcoma maydis (Corn smut fungus).